Here is a 120-residue protein sequence, read N- to C-terminus: Ribonuclease P protein component (120 aa).

The protein belongs to the RnpA family. In terms of assembly, consists of a catalytic RNA component (M1 or rnpB) and a protein subunit.

It catalyses the reaction Endonucleolytic cleavage of RNA, removing 5'-extranucleotides from tRNA precursor.. Functionally, RNaseP catalyzes the removal of the 5'-leader sequence from pre-tRNA to produce the mature 5'-terminus. It can also cleave other RNA substrates such as 4.5S RNA. The protein component plays an auxiliary but essential role in vivo by binding to the 5'-leader sequence and broadening the substrate specificity of the ribozyme. This chain is Ribonuclease P protein component, found in Mycobacterium marinum (strain ATCC BAA-535 / M).